Consider the following 427-residue polypeptide: Serine--tRNA ligase (427 aa).

L-serine is bound at residue 235 to 237; that stretch reads TSE. 266-268 is an ATP binding site; the sequence is RSE. Glu289 lines the L-serine pocket. 353–356 is an ATP binding site; it reads EISS. An L-serine-binding site is contributed by Ser388.

Belongs to the class-II aminoacyl-tRNA synthetase family. Type-1 seryl-tRNA synthetase subfamily. Homodimer. The tRNA molecule binds across the dimer.

Its subcellular location is the cytoplasm. The enzyme catalyses tRNA(Ser) + L-serine + ATP = L-seryl-tRNA(Ser) + AMP + diphosphate + H(+). The catalysed reaction is tRNA(Sec) + L-serine + ATP = L-seryl-tRNA(Sec) + AMP + diphosphate + H(+). It functions in the pathway aminoacyl-tRNA biosynthesis; selenocysteinyl-tRNA(Sec) biosynthesis; L-seryl-tRNA(Sec) from L-serine and tRNA(Sec): step 1/1. Functionally, catalyzes the attachment of serine to tRNA(Ser). Is also able to aminoacylate tRNA(Sec) with serine, to form the misacylated tRNA L-seryl-tRNA(Sec), which will be further converted into selenocysteinyl-tRNA(Sec). In Chromobacterium violaceum (strain ATCC 12472 / DSM 30191 / JCM 1249 / CCUG 213 / NBRC 12614 / NCIMB 9131 / NCTC 9757 / MK), this protein is Serine--tRNA ligase.